Consider the following 715-residue polypeptide: Poly(A) polymerase alpha-A (715 aa).

ATP-binding positions include 82–84 (FGP), threonine 91, 95–97 (DID), aspartate 149, lysine 210, tyrosine 219, and 228–229 (GV). Aspartate 95, aspartate 97, and aspartate 149 together coordinate Mg(2+). Residues 472-489 (RKQLHQLQPSHVSPKKKK) carry the Nuclear localization signal 1 motif. Disordered regions lie at residues 510–543 (DSDN…PAAP), 560–590 (QNNS…TPKP), and 607–693 (KPVS…DLSD). Composition is skewed to polar residues over residues 515–539 (MSVP…QGNS) and 560–588 (QNNS…SSTP). Residues 624-639 (KRTSSPSNEDSPKKNK) carry the Nuclear localization signal 2 motif. A compositionally biased stretch (basic and acidic residues) spans 655–673 (DQNKLETEELKEVHSEEKS). Residues 674–692 (SSPVPGSLPFSQQSSTDLS) show a composition bias toward polar residues.

Belongs to the poly(A) polymerase family. Monomer. Mg(2+) is required as a cofactor. Requires Mn(2+) as cofactor.

It is found in the nucleus. The catalysed reaction is RNA(n) + ATP = RNA(n)-3'-adenine ribonucleotide + diphosphate. Polymerase that creates the 3'-poly(A) tail of mRNA's. May acquire specificity through interaction with a cleavage and polyadenylation factor (CPSF). In Xenopus laevis (African clawed frog), this protein is Poly(A) polymerase alpha-A (papola-a).